Reading from the N-terminus, the 142-residue chain is Large ribosomal subunit protein uL13 (142 aa).

This sequence belongs to the universal ribosomal protein uL13 family. Part of the 50S ribosomal subunit.

Functionally, this protein is one of the early assembly proteins of the 50S ribosomal subunit, although it is not seen to bind rRNA by itself. It is important during the early stages of 50S assembly. The chain is Large ribosomal subunit protein uL13 from Chromohalobacter salexigens (strain ATCC BAA-138 / DSM 3043 / CIP 106854 / NCIMB 13768 / 1H11).